The chain runs to 206 residues: Type III pantothenate kinase (206 aa).

5-12 (DIGNSTAK) provides a ligand contact to ATP. Substrate contacts are provided by residues Tyr-67 and 72–75 (GVDR). Residue Asp-74 is the Proton acceptor of the active site. Asp-89 provides a ligand contact to K(+). Ser-92 serves as a coordination point for ATP. Residue Thr-144 participates in substrate binding.

The protein belongs to the type III pantothenate kinase family. In terms of assembly, homodimer. NH4(+) is required as a cofactor. The cofactor is K(+).

It is found in the cytoplasm. It catalyses the reaction (R)-pantothenate + ATP = (R)-4'-phosphopantothenate + ADP + H(+). It participates in cofactor biosynthesis; coenzyme A biosynthesis; CoA from (R)-pantothenate: step 1/5. Catalyzes the phosphorylation of pantothenate (Pan), the first step in CoA biosynthesis. This is Type III pantothenate kinase from Campylobacter hominis (strain ATCC BAA-381 / DSM 21671 / CCUG 45161 / LMG 19568 / NCTC 13146 / CH001A).